The chain runs to 515 residues: G-protein coupled receptor 176 (515 aa).

The segment covering 1 to 16 has biased composition (polar residues); it reads MGHNGSWISPNASEPH. Residues 1–20 are disordered; that stretch reads MGHNGSWISPNASEPHNASG. Residues 1–42 are Extracellular-facing; it reads MGHNGSWISPNASEPHNASGAEAAGVNRSALGEFGEAQLYRQ. 4 N-linked (GlcNAc...) asparagine glycosylation sites follow: asparagine 4, asparagine 11, asparagine 17, and asparagine 27. Residues 43 to 63 traverse the membrane as a helical segment; it reads FTTTVQVVIFIGSLLGNFMVL. Over 64 to 82 the chain is Cytoplasmic; sequence WSTCRTTVFKSVTNRFIKN. Residues 83–103 traverse the membrane as a helical segment; sequence LACSGICASLVCVPFDIILST. The Extracellular portion of the chain corresponds to 104–118; sequence SPHCCWWIYTMLFCK. The chain crosses the membrane as a helical span at residues 119 to 139; the sequence is VVKFLHKVFCSVTILSFPAIA. Topologically, residues 140–160 are cytoplasmic; sequence LDRYYSVLYPLERKISDAKSR. The helical transmembrane segment at 161 to 181 threads the bilayer; sequence ELVMYIWAHAVVASVPVFAVT. The Extracellular segment spans residues 182–207; the sequence is NVADIYATSTCTEVWSNSLGHLVYVL. A helical transmembrane segment spans residues 208–228; the sequence is VYNITTVIVPVVVVFLFLILI. Over 229–267 the chain is Cytoplasmic; the sequence is RRALSASQKKKVIIAALRTPQNTISIPYASQREAELHAT. A helical membrane pass occupies residues 268 to 288; it reads LLSMVMVFILCSVPYATLVVY. The Extracellular segment spans residues 289–299; it reads QTVLNVPDTSV. A helical transmembrane segment spans residues 300–320; sequence FLLLTAVWLPKVSLLANPVLF. The Cytoplasmic segment spans residues 321 to 515; it reads LTVNKSVRKC…KVSIFPKVDS (195 aa).

This sequence belongs to the G-protein coupled receptor 1 family.

It localises to the cell membrane. Orphan receptor involved in normal circadian rhythm behavior. Acts through the G-protein subclass G(z)-alpha and has an agonist-independent basal activity to repress cAMP production. This is G-protein coupled receptor 176 (GPR176) from Homo sapiens (Human).